The primary structure comprises 295 residues: ATP synthase gamma chain (295 aa).

The protein belongs to the ATPase gamma chain family. F-type ATPases have 2 components, CF(1) - the catalytic core - and CF(0) - the membrane proton channel. CF(1) has five subunits: alpha(3), beta(3), gamma(1), delta(1), epsilon(1). CF(0) has three main subunits: a, b and c.

It is found in the cell inner membrane. Produces ATP from ADP in the presence of a proton gradient across the membrane. The gamma chain is believed to be important in regulating ATPase activity and the flow of protons through the CF(0) complex. The protein is ATP synthase gamma chain of Bdellovibrio bacteriovorus (strain ATCC 15356 / DSM 50701 / NCIMB 9529 / HD100).